Reading from the N-terminus, the 513-residue chain is ATP synthase subunit alpha (513 aa).

Glycine 169–threonine 176 contributes to the ATP binding site.

Belongs to the ATPase alpha/beta chains family. As to quaternary structure, F-type ATPases have 2 components, CF(1) - the catalytic core - and CF(0) - the membrane proton channel. CF(1) has five subunits: alpha(3), beta(3), gamma(1), delta(1), epsilon(1). CF(0) has three main subunits: a(1), b(2) and c(9-12). The alpha and beta chains form an alternating ring which encloses part of the gamma chain. CF(1) is attached to CF(0) by a central stalk formed by the gamma and epsilon chains, while a peripheral stalk is formed by the delta and b chains.

It is found in the cell inner membrane. The enzyme catalyses ATP + H2O + 4 H(+)(in) = ADP + phosphate + 5 H(+)(out). Its function is as follows. Produces ATP from ADP in the presence of a proton gradient across the membrane. The alpha chain is a regulatory subunit. The chain is ATP synthase subunit alpha from Shewanella sediminis (strain HAW-EB3).